A 1052-amino-acid chain; its full sequence is Focal adhesion kinase 1 (1052 aa).

Residues 1–27 are disordered; that stretch reads MAAAYLDPNLNHTPNSSTKTHLGTGME. N-acetylalanine is present on A2. Phosphotyrosine is present on Y5. Residues 10–21 are compositionally biased toward polar residues; it reads LNHTPNSSTKTH. Phosphothreonine is present on T13. S29 and S54 each carry phosphoserine. The 321-residue stretch at 35 to 355 folds into the FERM domain; it reads RVLKVFHYFE…GYCRLVNGTS (321 aa). A Glycyl lysine isopeptide (Lys-Gly) (interchain with G-Cter in SUMO) cross-link involves residue K152. Y397 carries the post-translational modification Phosphotyrosine; by autocatalysis. Phosphotyrosine is present on Y407. Residues 422-680 form the Protein kinase domain; sequence IELGRCIGEG…ELKAQLSTIL (259 aa). ATP is bound by residues 428-434, K454, and 500-502; these read IGEGQFG and ELC. Residue D546 is the Proton acceptor of the active site. Position 570 is a phosphotyrosine (Y570). Phosphotyrosine; by RET and SRC occurs at positions 576 and 577. Phosphoserine is present on S580. Residues 684-697 are compositionally biased toward basic and acidic residues; that stretch reads KAQQEERMRMESRR. Disordered regions lie at residues 684–734 and 839–922; these read KAQQ…PSPQ and LSRG…RSND. The interval 707-1052 is interaction with TGFB1I1; that stretch reads GSDEAPPKPS…LKMLGQTRPH (346 aa). S722 is modified (phosphoserine). The residue at position 732 (S732) is a Phosphoserine; by CDK5. Residues 839–849 are compositionally biased toward basic and acidic residues; it reads LSRGSIDREDG. Position 843 is a phosphoserine (S843). Y861 bears the Phosphotyrosine mark. The segment covering 869 to 880 has biased composition (pro residues); it reads PAAPPKKPPRPG. Phosphoserine is present on residues S887 and S910. Positions 912–1052 are interaction with ARHGEF28; that stretch reads PPTANLDRSN…LKMLGQTRPH (141 aa). T914 carries the phosphothreonine modification. Y925 is modified (phosphotyrosine).

Belongs to the protein kinase superfamily. Tyr protein kinase family. FAK subfamily. Interacts (via first Pro-rich region) with CAS family members (via SH3 domain), including BCAR1, BCAR3, and CASS4. Interacts with NEDD9 (via SH3 domain). Interacts with GIT1. Interacts with SORBS1. Interacts with ARHGEF28. Interacts with SHB. Part of a complex composed of THSD1, PTK2/FAK1, TLN1 and VCL. Interacts with PXN and TLN1. Interacts with STAT1. Interacts with DCC. Interacts with WASL. Interacts with ARHGEF7. Interacts with GRB2 and GRB7. Component of a complex that contains at least FER, CTTN and PTK2/FAK1. Interacts with BMX. Interacts with TGFB1I1. Interacts with STEAP4. Interacts with ZFYVE21. Interacts with ESR1. Interacts with PIK3R1 or PIK3R2. Interacts with SRC, FGR, FLT4 and RET. Interacts with EPHA2 in resting cells; activation of EPHA2 recruits PTPN11, leading to dephosphorylation of PTK2/FAK1 and dissociation of the complex. Interacts with EPHA1 (kinase activity-dependent). Interacts with CD4; this interaction requires the presence of HIV-1 gp120. Interacts with PIAS1. Interacts with ARHGAP26 and SHC1. Interacts with RB1CC1; this inhibits PTK2/FAK1 activity and activation of downstream signaling pathways. Interacts with P53/TP53 and MDM2. Interacts with LPXN (via LD motif 3). Interacts with MISP. Interacts with CIB1 isoform 2. Interacts with CD36. Interacts with EMP2; regulates PTK2 activation and localization. Interacts with DSCAM. Interacts with AMBRA1. Interacts (when tyrosine-phosphorylated) with tensin TNS1; the interaction is increased by phosphorylation of TNS1. Post-translationally, phosphorylated on tyrosine residues upon activation, e.g. upon integrin signaling. Tyr-397 is the major autophosphorylation site, but other kinases can also phosphorylate this residue. Phosphorylation at Tyr-397 promotes interaction with SRC and SRC family members, leading to phosphorylation at Tyr-576, Tyr-577 and at additional tyrosine residues. FGR promotes phosphorylation at Tyr-397 and Tyr-576. FER promotes phosphorylation at Tyr-577, Tyr-861 and Tyr-925, even when cells are not adherent. Tyr-397, Tyr-576 and Ser-722 are phosphorylated only when cells are adherent. Phosphorylation at Tyr-397 is important for interaction with BMX, PIK3R1 and SHC1. Phosphorylation at Tyr-925 is important for interaction with GRB2. Dephosphorylated by PTPN11; PTPN11 is recruited to PTK2 via EPHA2 (tyrosine phosphorylated). Microtubule-induced dephosphorylation at Tyr-397 is crucial for the induction of focal adhesion disassembly; this dephosphorylation could be catalyzed by PTPN11 and regulated by ZFYVE21. Phosphorylation on tyrosine residues is enhanced by NTN1. Sumoylated; this enhances autophosphorylation. Detected in B and T-lymphocytes. Isoform 1 and isoform 6 are detected in lung fibroblasts (at protein level). Ubiquitous. Expressed in epithelial cells (at protein level).

The protein resides in the cell junction. It localises to the focal adhesion. Its subcellular location is the cell membrane. The protein localises to the cytoplasm. It is found in the perinuclear region. The protein resides in the cell cortex. It localises to the cytoskeleton. Its subcellular location is the microtubule organizing center. The protein localises to the centrosome. It is found in the nucleus. The protein resides in the cilium basal body. It carries out the reaction L-tyrosyl-[protein] + ATP = O-phospho-L-tyrosyl-[protein] + ADP + H(+). Subject to autoinhibition, mediated by interactions between the FERM domain and the kinase domain. Activated by autophosphorylation at Tyr-397. This promotes interaction with SRC and phosphorylation at Tyr-576 and Tyr-577 in the kinase activation loop. Phosphorylation at Tyr-576 and Tyr-577 is required for maximal kinase activity. Inhibited by TAC544, TAE226, PF-573,228 and PF-562,271. Functionally, non-receptor protein-tyrosine kinase that plays an essential role in regulating cell migration, adhesion, spreading, reorganization of the actin cytoskeleton, formation and disassembly of focal adhesions and cell protrusions, cell cycle progression, cell proliferation and apoptosis. Required for early embryonic development and placenta development. Required for embryonic angiogenesis, normal cardiomyocyte migration and proliferation, and normal heart development. Regulates axon growth and neuronal cell migration, axon branching and synapse formation; required for normal development of the nervous system. Plays a role in osteogenesis and differentiation of osteoblasts. Functions in integrin signal transduction, but also in signaling downstream of numerous growth factor receptors, G-protein coupled receptors (GPCR), EPHA2, netrin receptors and LDL receptors. Forms multisubunit signaling complexes with SRC and SRC family members upon activation; this leads to the phosphorylation of additional tyrosine residues, creating binding sites for scaffold proteins, effectors and substrates. Regulates numerous signaling pathways. Promotes activation of phosphatidylinositol 3-kinase and the AKT1 signaling cascade. Promotes activation of MAPK1/ERK2, MAPK3/ERK1 and the MAP kinase signaling cascade. Promotes localized and transient activation of guanine nucleotide exchange factors (GEFs) and GTPase-activating proteins (GAPs), and thereby modulates the activity of Rho family GTPases. Signaling via CAS family members mediates activation of RAC1. Phosphorylates NEDD9 following integrin stimulation. Recruits the ubiquitin ligase MDM2 to P53/TP53 in the nucleus, and thereby regulates P53/TP53 activity, P53/TP53 ubiquitination and proteasomal degradation. Phosphorylates SRC; this increases SRC kinase activity. Phosphorylates ACTN1, ARHGEF7, GRB7, RET and WASL. Promotes phosphorylation of PXN and STAT1; most likely PXN and STAT1 are phosphorylated by a SRC family kinase that is recruited to autophosphorylated PTK2/FAK1, rather than by PTK2/FAK1 itself. Promotes phosphorylation of BCAR1; GIT2 and SHC1; this requires both SRC and PTK2/FAK1. Promotes phosphorylation of BMX and PIK3R1. Isoform 6 (FRNK) does not contain a kinase domain and inhibits PTK2/FAK1 phosphorylation and signaling. Its enhanced expression can attenuate the nuclear accumulation of LPXN and limit its ability to enhance serum response factor (SRF)-dependent gene transcription. Isoform 6 (FRNK) does not contain a kinase domain and inhibits PTK2/FAK1 phosphorylation and signaling. Its enhanced expression can attenuate the nuclear accumulation of LPXN and limit its ability to enhance serum response factor (SRF)-dependent gene transcription. The polypeptide is Focal adhesion kinase 1 (Homo sapiens (Human)).